The primary structure comprises 154 residues: Large ribosomal subunit protein uL11 (154 aa).

This sequence belongs to the universal ribosomal protein uL11 family. As to quaternary structure, part of the ribosomal stalk of the 50S ribosomal subunit. Interacts with L10 and the large rRNA to form the base of the stalk. L10 forms an elongated spine to which L12 dimers bind in a sequential fashion forming a multimeric L10(L12)X complex. One or more lysine residues are methylated.

Functionally, forms part of the ribosomal stalk which helps the ribosome interact with GTP-bound translation factors. The polypeptide is Large ribosomal subunit protein uL11 (Leuconostoc mesenteroides subsp. mesenteroides (strain ATCC 8293 / DSM 20343 / BCRC 11652 / CCM 1803 / JCM 6124 / NCDO 523 / NBRC 100496 / NCIMB 8023 / NCTC 12954 / NRRL B-1118 / 37Y)).